The following is a 284-amino-acid chain: Shikimate dehydrogenase (NADP(+)) (284 aa).

Residues 20–22 (SIS) and serine 67 contribute to the shikimate site. Lysine 71 functions as the Proton acceptor in the catalytic mechanism. Aspartate 83 provides a ligand contact to NADP(+). Shikimate contacts are provided by asparagine 92 and aspartate 107. Residues 129–133 (GAGGA) and isoleucine 227 each bind NADP(+). Residue tyrosine 229 coordinates shikimate. Residue glycine 250 participates in NADP(+) binding.

It belongs to the shikimate dehydrogenase family. As to quaternary structure, homodimer.

The catalysed reaction is shikimate + NADP(+) = 3-dehydroshikimate + NADPH + H(+). The protein operates within metabolic intermediate biosynthesis; chorismate biosynthesis; chorismate from D-erythrose 4-phosphate and phosphoenolpyruvate: step 4/7. Involved in the biosynthesis of the chorismate, which leads to the biosynthesis of aromatic amino acids. Catalyzes the reversible NADPH linked reduction of 3-dehydroshikimate (DHSA) to yield shikimate (SA). The polypeptide is Shikimate dehydrogenase (NADP(+)) (Streptococcus pneumoniae (strain 70585)).